Here is a 538-residue protein sequence, read N- to C-terminus: Atos homolog protein B (538 aa).

Low complexity predominate over residues 1-18 (MRHVQAEPSPSSEPEAGP). Disordered stretches follow at residues 1-103 (MRHV…GLLG), 156-185 (HTRDWASPDPGGHGSLGESPGPAPPGQLHT), and 197-308 (GGKS…PMGR). Residues 227–238 (HTPPGPGPPGPC) show a composition bias toward pro residues. Serine 254 and serine 255 each carry phosphoserine. Polar residues predominate over residues 274–286 (AANSSDAKATSFW). The required for macropage invasion stretch occupies residues 348-430 (LLGNFEESLL…VPKVGTVQVT (83 aa)). Residues 436–444 (QTVVKMFLV) are transactivation domain 1 (TAD1).

It belongs to the ATOS family.

The protein resides in the nucleus. Its function is as follows. Transcription regulator that may syncronize transcriptional and translational programs. In Macaca fascicularis (Crab-eating macaque), this protein is Atos homolog protein B.